We begin with the raw amino-acid sequence, 488 residues long: Ribulose bisphosphate carboxylase large chain (488 aa).

Residues Asn-128 and Thr-178 each coordinate substrate. Lys-180 functions as the Proton acceptor in the catalytic mechanism. Lys-182 lines the substrate pocket. Mg(2+)-binding residues include Lys-206, Asp-208, and Glu-209. Lys-206 carries the N6-carboxylysine modification. His-298 acts as the Proton acceptor in catalysis. Residues Arg-299, His-331, and Ser-383 each contribute to the substrate site.

The protein belongs to the RuBisCO large chain family. Type I subfamily. Heterohexadecamer of 8 large chains and 8 small chains. The cofactor is Mg(2+).

The catalysed reaction is 2 (2R)-3-phosphoglycerate + 2 H(+) = D-ribulose 1,5-bisphosphate + CO2 + H2O. It carries out the reaction D-ribulose 1,5-bisphosphate + O2 = 2-phosphoglycolate + (2R)-3-phosphoglycerate + 2 H(+). RuBisCO catalyzes two reactions: the carboxylation of D-ribulose 1,5-bisphosphate, the primary event in carbon dioxide fixation, as well as the oxidative fragmentation of the pentose substrate. Both reactions occur simultaneously and in competition at the same active site. In Variovorax paradoxus (strain S110), this protein is Ribulose bisphosphate carboxylase large chain.